A 498-amino-acid polypeptide reads, in one-letter code: Cytochrome P450 monooxygenase 71 (498 aa).

Residues tyrosine 7–serine 24 traverse the membrane as a helical segment. An N-linked (GlcNAc...) asparagine glycan is attached at asparagine 425. Cysteine 440 contacts heme.

The protein belongs to the cytochrome P450 family. The cofactor is heme.

The protein resides in the membrane. It participates in secondary metabolite biosynthesis. Cytochrome P450 monooxygenase that is able to use dehydroabietic acid and testosterone as substrates for oxidation, suggesting that the natural substrate(s) may be structurally related to steroid compounds. This Postia placenta (strain ATCC 44394 / Madison 698-R) (Brown rot fungus) protein is Cytochrome P450 monooxygenase 71.